The primary structure comprises 426 residues: Probable imidazolonepropionase (426 aa).

Positions 159 and 192 each coordinate 4-imidazolone-5-propanoate. Tyr-159 contributes to the N-formimidoyl-L-glutamate binding site. Fe(3+) is bound at residue His-260. His-260 is a binding site for Zn(2+). Position 263 (Glu-263) interacts with 4-imidazolone-5-propanoate. Asp-334 provides a ligand contact to Fe(3+). Asp-334 is a binding site for Zn(2+). Asn-336 lines the N-formimidoyl-L-glutamate pocket.

It belongs to the metallo-dependent hydrolases superfamily. HutI family. Requires Zn(2+) as cofactor. Fe(3+) is required as a cofactor.

It catalyses the reaction 4-imidazolone-5-propanoate + H2O = N-formimidoyl-L-glutamate. The protein operates within amino-acid degradation; L-histidine degradation into L-glutamate; N-formimidoyl-L-glutamate from L-histidine: step 3/3. In Mus musculus (Mouse), this protein is Probable imidazolonepropionase (Amdhd1).